Here is a 305-residue protein sequence, read N- to C-terminus: UDP-3-O-acyl-N-acetylglucosamine deacetylase (305 aa).

Zn(2+) is bound by residues H77, H234, and D238. H261 (proton donor) is an active-site residue.

This sequence belongs to the LpxC family. The cofactor is Zn(2+).

The enzyme catalyses a UDP-3-O-[(3R)-3-hydroxyacyl]-N-acetyl-alpha-D-glucosamine + H2O = a UDP-3-O-[(3R)-3-hydroxyacyl]-alpha-D-glucosamine + acetate. Its pathway is glycolipid biosynthesis; lipid IV(A) biosynthesis; lipid IV(A) from (3R)-3-hydroxytetradecanoyl-[acyl-carrier-protein] and UDP-N-acetyl-alpha-D-glucosamine: step 2/6. Catalyzes the hydrolysis of UDP-3-O-myristoyl-N-acetylglucosamine to form UDP-3-O-myristoylglucosamine and acetate, the committed step in lipid A biosynthesis. This is UDP-3-O-acyl-N-acetylglucosamine deacetylase from Oleidesulfovibrio alaskensis (strain ATCC BAA-1058 / DSM 17464 / G20) (Desulfovibrio alaskensis).